The following is a 711-amino-acid chain: Hydroperoxide isomerase ALOXE3 (711 aa).

Residues 2 to 119 (AVYRLCVTTG…TVELRPGTAR (118 aa)) enclose the PLAT domain. Residues 120-711 (TICQDSLPLL…PPLIENSVSI (592 aa)) enclose the Lipoxygenase domain. Residues histidine 408, histidine 413, histidine 588, asparagine 592, and isoleucine 711 each coordinate Fe cation.

The protein belongs to the lipoxygenase family. It depends on Fe cation as a cofactor. Skin specific.

The protein localises to the cytoplasm. It catalyses the reaction a hydroperoxyeicosatetraenoate = a hydroxy-epoxy-eicosatetraenoate. The enzyme catalyses (8S)-hydroperoxy-(5Z,9E,11Z,14Z)-eicosatetraenoate = (10R)-hydroxy-(8S,9S)-epoxy-(5Z,11Z,14Z)-eicosatrienoate. It carries out the reaction (12R)-hydroperoxy-(5Z,8Z,10E,14Z)-eicosatetraenoate = (8R)-hydroxy-(11R,12R)-epoxy-(5Z,9E,14Z)-eicosatrienoate. The catalysed reaction is (12S)-hydroperoxy-(5Z,8Z,10E,14Z)-eicosatetraenoate = (8R)-hydroxy-(11S,12S)-epoxy-(5Z,9E,14Z)-eicosatrienoate. It catalyses the reaction (12S)-hydroperoxy-(5Z,8Z,10E,14Z)-eicosatetraenoate = (10R)-hydroxy-(11S,12S)-epoxy-(5Z,8Z,14Z)-eicosatrienoate. The enzyme catalyses (15S)-hydroperoxy-(5Z,8Z,11Z,13E)-eicosatetraenoate = (13R)-hydroxy-(14S,15S)-epoxy-(5Z,8Z,11Z)-eicosatrienoate. It carries out the reaction (13S)-hydroperoxy-(9Z,11E)-octadecadienoate = 11-hydroxy-(12S,13S)-epoxy-(9Z)-octadecenoate. The catalysed reaction is (5S)-hydroperoxy-(6E,8Z,11Z,14Z)-eicosatetraenoate = 7R-hydroxy-5S,6S-epoxy-(8Z,11Z,14Z)-eicosatrienoate. It catalyses the reaction N-[omega-(9R)-hydroperoxy-(10E,12Z)-octadecadienoyloxy]acyl-beta-D-glucosyl-(1&lt;-&gt;1)-octadecasphing-4E-enine = a N-[omega-(9R,10R)-epoxy-(13R)-hydroxy-(11E)-octadecenoyloxy]acyl-beta-D-glucosyl-(1&lt;-&gt;1)-sphing-4E-enine. The enzyme catalyses a N-[omega-(9R)-hydroperoxy-(10E,12Z)-octadecadienoyloxy]-acylsphin-4E-enine = a N-[omega-(9R,10R)-epoxy-(13R)-hydroxy-(11E)-octadecenoyloxy]-acylsphing-4E-enine. It carries out the reaction a hydroperoxyeicosatetraenoate = an oxoeicosatetraenoate + H2O. The catalysed reaction is (8R)-hydroperoxy-(5Z,9E,11Z,14Z)-eicosatetraenoate = 8-oxo-(5Z,9E,11Z,14Z)-eicosatetraenoate + H2O. It catalyses the reaction (8S)-hydroperoxy-(5Z,9E,11Z,14Z)-eicosatetraenoate = 8-oxo-(5Z,9E,11Z,14Z)-eicosatetraenoate + H2O. The enzyme catalyses (12R)-hydroperoxy-(5Z,8Z,10E,14Z)-eicosatetraenoate = 12-oxo-(5Z,8Z,10E,14Z)-eicosatetraenoate + H2O. It carries out the reaction (12S)-hydroperoxy-(5Z,8Z,10E,14Z)-eicosatetraenoate = 12-oxo-(5Z,8Z,10E,14Z)-eicosatetraenoate + H2O. The catalysed reaction is (15S)-hydroperoxy-(5Z,8Z,11Z,13E)-eicosatetraenoate = 15-oxo-(5Z,8Z,11Z,13E)-eicosatetraenoate + H2O. It catalyses the reaction (13S)-hydroperoxy-(9Z,11E)-octadecadienoate = 13-oxo-(9Z,11E)-octadecadienoate + H2O. Its pathway is lipid metabolism; hydroperoxy eicosatetraenoic acid biosynthesis. The protein operates within lipid metabolism; sphingolipid metabolism. Functionally, non-heme iron-containing lipoxygenase which is atypical in that it displays a prominent hydroperoxide isomerase activity and a reduced lipoxygenases activity. The hydroperoxide isomerase activity catalyzes the isomerization of hydroperoxides, derived from arachidonic and linoleic acid by ALOX12B, into hepoxilin-type epoxyalcohols and ketones. In presence of oxygen, oxygenates polyunsaturated fatty acids, including arachidonic acid, to produce fatty acid hydroperoxides. In the skin, acts downstream of ALOX12B on the linoleate moiety of esterified omega-hydroxyacyl-sphingosine (EOS) ceramides to produce an epoxy-ketone derivative, a crucial step in the conjugation of omega-hydroxyceramide to membrane proteins. Therefore plays a crucial role in the synthesis of corneocytes lipid envelope and the establishment of the skin barrier to water loss. In parallel, it may have a signaling function in barrier formation through the production of hepoxilins metabolites. Also plays a role in adipocyte differentiation through hepoxilin A3 and hepoxilin B3 production which in turn activate PPARG. Through the production of hepoxilins in the spinal cord, it may regulate inflammatory tactile allodynia. The sequence is that of Hydroperoxide isomerase ALOXE3 from Mus musculus (Mouse).